Here is a 412-residue protein sequence, read N- to C-terminus: Peptidase T (412 aa).

Position 81 (histidine 81) interacts with Zn(2+). Aspartate 83 is a catalytic residue. Aspartate 144 contributes to the Zn(2+) binding site. The Proton acceptor role is filled by glutamate 178. Zn(2+) contacts are provided by glutamate 179, aspartate 201, and histidine 383.

The protein belongs to the peptidase M20B family. Zn(2+) is required as a cofactor.

It is found in the cytoplasm. The catalysed reaction is Release of the N-terminal residue from a tripeptide.. Functionally, cleaves the N-terminal amino acid of tripeptides. This is Peptidase T from Bacillus cereus (strain Q1).